We begin with the raw amino-acid sequence, 123 residues long: MAGRSGDPDEELLRAVRIIKTLYQSNPYPSPAGTRQARKNRRRRWRARQRQIHSISERILSACLGRPAEPVPFQLPPLEGLSLDCSKDGGTSGTQQPQGTETGVGRPQVLVEPPVVLGSGTKE.

Ser5 is modified (phosphoserine; by host CK2). The tract at residues 18 to 26 is homomultimerization; the sequence is IIKTLYQSN. Disordered stretches follow at residues 24–50 and 79–123; these read QSNPYPSPAGTRQARKNRRRRWRARQR and EGLS…GTKE. The Nuclear localization signal and RNA-binding (RRE) signature appears at 34–50; it reads TRQARKNRRRRWRARQR. Residues 36-50 show a composition bias toward basic residues; sequence QARKNRRRRWRARQR. The short motif at 73–84 is the Nuclear export signal and binding to XPO1 element; that stretch reads FQLPPLEGLSLD. Ser92 bears the Phosphoserine; by host mark. Residues 93 to 105 show a composition bias toward low complexity; it reads GTQQPQGTETGVG.

Belongs to the HIV-1 REV protein family. Homomultimer; when bound to the RRE. Multimeric assembly is essential for activity and may involve XPO1. Binds to human KPNB1, XPO1, TNPO1, RANBP5 and IPO7. Interacts with the viral Integrase. Interacts with human KHDRBS1. Interacts with human NAP1; this interaction decreases Rev multimerization and stimulates its activity. Interacts with human DEAD-box helicases DDX3 and DDX24; these interactions may serve for viral RNA export to the cytoplasm and packaging, respectively. Interacts with human PSIP1; this interaction may inhibit HIV-1 DNA integration by promoting dissociation of the Integrase-LEDGF/p75 complex. In terms of processing, asymmetrically arginine dimethylated at one site by host PRMT6. Methylation impairs the RNA-binding activity and export of viral RNA from the nucleus to the cytoplasm. Post-translationally, phosphorylated by protein kinase CK2. Presence of, and maybe binding to the N-terminus of the regulatory beta subunit of CK2 is necessary for CK2-mediated Rev's phosphorylation.

Its subcellular location is the host nucleus. It localises to the host nucleolus. It is found in the host cytoplasm. Functionally, escorts unspliced or incompletely spliced viral pre-mRNAs (late transcripts) out of the nucleus of infected cells. These pre-mRNAs carry a recognition sequence called Rev responsive element (RRE) located in the env gene, that is not present in fully spliced viral mRNAs (early transcripts). This function is essential since most viral proteins are translated from unspliced or partially spliced pre-mRNAs which cannot exit the nucleus by the pathway used by fully processed cellular mRNAs. Rev itself is translated from a fully spliced mRNA that readily exits the nucleus. Rev's nuclear localization signal (NLS) binds directly to KPNB1/Importin beta-1 without previous binding to KPNA1/Importin alpha-1. KPNB1 binds to the GDP bound form of RAN (Ran-GDP) and targets Rev to the nucleus. In the nucleus, the conversion from Ran-GDP to Ran-GTP dissociates Rev from KPNB1 and allows Rev's binding to the RRE in viral pre-mRNAs. Rev multimerization on the RRE via cooperative assembly exposes its nuclear export signal (NES) to the surface. Rev can then form a complex with XPO1/CRM1 and Ran-GTP, leading to nuclear export of the complex. Conversion from Ran-GTP to Ran-GDP mediates dissociation of the Rev/RRE/XPO1/RAN complex, so that Rev can return to the nucleus for a subsequent round of export. Beside KPNB1, also seems to interact with TNPO1/Transportin-1, RANBP5/IPO5 and IPO7/RANBP7 for nuclear import. The nucleoporin-like HRB/RIP is an essential cofactor that probably indirectly interacts with Rev to release HIV RNAs from the perinuclear region to the cytoplasm. The protein is Protein Rev of Human immunodeficiency virus type 1 group M subtype G (isolate 92NG083) (HIV-1).